Here is a 347-residue protein sequence, read N- to C-terminus: MKKRIAIVLFNLGGPNSLELVKPFLFNLFYDKAIINLPNPLRYIIAKIISIIRERKSQKIYSLIGGKSSLLQETQEQRLLLTKKLKQLIKEDFAVFINMRYSAPFVKETINQIKKYNPSEIILLPLYPQFSSTTTGSSVKNFLQNLDIPIKTLDIPIKTVCCYPLEEDFIKAHVSLIKEKLYDKNFCILFSAHGLPEKIIKAGDPYSFQIKETVKAIVKELNIKDLDYKITYQSRVGPIEWLKPNTEDEIELAGKLKKDVIIVPISFVSEHVETLVELDIEYKLIADKYEIQYTRIPTLGTNKIFINSLTNILLRFINKVDTNLVTSSSSTRICPNEFTKCLCKLKN.

Fe cation contacts are provided by histidine 193 and glutamate 273.

The protein belongs to the ferrochelatase family.

Its subcellular location is the cytoplasm. It carries out the reaction heme b + 2 H(+) = protoporphyrin IX + Fe(2+). It participates in porphyrin-containing compound metabolism; protoheme biosynthesis; protoheme from protoporphyrin-IX: step 1/1. Its function is as follows. Catalyzes the ferrous insertion into protoporphyrin IX. The protein is Ferrochelatase of Rickettsia canadensis (strain McKiel).